The following is a 402-amino-acid chain: S-adenosylmethionine synthase (402 aa).

H15 contributes to the ATP binding site. D17 lines the Mg(2+) pocket. E43 contacts K(+). E56 and Q99 together coordinate L-methionine. A flexible loop region spans residues 99 to 109; that stretch reads QSPDIAQGVDT. Residues 174–176, 247–248, D256, 262–263, A279, and K283 each bind ATP; these read DGK, RF, and RK. Residue D256 participates in L-methionine binding. An L-methionine-binding site is contributed by K287.

Belongs to the AdoMet synthase family. In terms of assembly, homotetramer; dimer of dimers. The cofactor is Mg(2+). K(+) serves as cofactor.

It localises to the cytoplasm. The catalysed reaction is L-methionine + ATP + H2O = S-adenosyl-L-methionine + phosphate + diphosphate. It functions in the pathway amino-acid biosynthesis; S-adenosyl-L-methionine biosynthesis; S-adenosyl-L-methionine from L-methionine: step 1/1. In terms of biological role, catalyzes the formation of S-adenosylmethionine (AdoMet) from methionine and ATP. The overall synthetic reaction is composed of two sequential steps, AdoMet formation and the subsequent tripolyphosphate hydrolysis which occurs prior to release of AdoMet from the enzyme. This is S-adenosylmethionine synthase from Streptomyces coelicolor (strain ATCC BAA-471 / A3(2) / M145).